The primary structure comprises 274 residues: Sulfur carrier protein FdhD (274 aa).

Cys121 functions as the Cysteine persulfide intermediate in the catalytic mechanism. 258 to 263 (FSKPGR) lines the Mo-bis(molybdopterin guanine dinucleotide) pocket.

This sequence belongs to the FdhD family.

The protein localises to the cytoplasm. Functionally, required for formate dehydrogenase (FDH) activity. Acts as a sulfur carrier protein that transfers sulfur from IscS to the molybdenum cofactor prior to its insertion into FDH. This is Sulfur carrier protein FdhD from Yersinia pseudotuberculosis serotype IB (strain PB1/+).